A 178-amino-acid chain; its full sequence is ATP synthase subunit delta (178 aa).

The protein belongs to the ATPase delta chain family. As to quaternary structure, F-type ATPases have 2 components, F(1) - the catalytic core - and F(0) - the membrane proton channel. F(1) has five subunits: alpha(3), beta(3), gamma(1), delta(1), epsilon(1). F(0) has three main subunits: a(1), b(2) and c(10-14). The alpha and beta chains form an alternating ring which encloses part of the gamma chain. F(1) is attached to F(0) by a central stalk formed by the gamma and epsilon chains, while a peripheral stalk is formed by the delta and b chains.

The protein localises to the cell membrane. Its function is as follows. F(1)F(0) ATP synthase produces ATP from ADP in the presence of a proton or sodium gradient. F-type ATPases consist of two structural domains, F(1) containing the extramembraneous catalytic core and F(0) containing the membrane proton channel, linked together by a central stalk and a peripheral stalk. During catalysis, ATP synthesis in the catalytic domain of F(1) is coupled via a rotary mechanism of the central stalk subunits to proton translocation. Functionally, this protein is part of the stalk that links CF(0) to CF(1). It either transmits conformational changes from CF(0) to CF(1) or is implicated in proton conduction. This chain is ATP synthase subunit delta, found in Desulfitobacterium hafniense (strain Y51).